Here is an 813-residue protein sequence, read N- to C-terminus: Hyaluronate lyase HylB (813 aa).

Residues 1–32 (MFGTPSRRTFLTASALSAMALAASPTVTDAIA) constitute a signal peptide (tat-type signal). Active-site residues include N222, H272, and Y281.

Belongs to the polysaccharide lyase 8 family. Post-translationally, predicted to be exported by the Tat system. The position of the signal peptide cleavage has not been experimentally proven.

The protein resides in the secreted. The enzyme catalyses [hyaluronan](n) = n 3-(4-deoxy-beta-D-gluc-4-enuronosyl)-N-acetyl-D-glucosamine + H2O. In terms of biological role, degrades hyaluronic acid (HA) exclusively into HA disaccharides (HA-2). Produced HA-2s confer anti-inflammatory properties leading to reduced immunopathology in the mouse model of acne. The protein is Hyaluronate lyase HylB of Cutibacterium acnes (strain DSM 16379 / KPA171202) (Propionibacterium acnes).